The chain runs to 943 residues: Translation initiation factor IF-2 (943 aa).

The interval 29–349 is disordered; sequence LSVKSHSSSV…NNRGNSAPKL (321 aa). Basic and acidic residues-rich tracts occupy residues 69–82, 112–137, 145–155, 163–196, and 224–253; these read PKEE…DKAS, FKAE…DNRN, QGKRHNNDRRN, DHNK…RDNA, and RQSE…EKQQ. Low complexity predominate over residues 254–266; that stretch reads AEVAVQKAAAETK. Basic and acidic residues predominate over residues 296–309; the sequence is KSRDNHRVNEDGPK. The span at 313-332 shows a compositional bias: low complexity; that stretch reads NNKWNNQNQVRNQRNSNWNK. One can recognise a tr-type G domain in the interval 445 to 614; the sequence is ERAPVVTIMG…LLVAEVEELK (170 aa). The interval 454 to 461 is G1; it reads GHVDHGKT. A GTP-binding site is contributed by 454–461; sequence GHVDHGKT. The interval 479–483 is G2; it reads GITQH. Positions 500-503 are G3; it reads DTPG. GTP contacts are provided by residues 500 to 504 and 554 to 557; these read DTPGH and NKID. Residues 554–557 form a G4 region; that stretch reads NKID. Residues 590 to 592 form a G5 region; it reads SAK.

It belongs to the TRAFAC class translation factor GTPase superfamily. Classic translation factor GTPase family. IF-2 subfamily.

It is found in the cytoplasm. Its function is as follows. One of the essential components for the initiation of protein synthesis. Protects formylmethionyl-tRNA from spontaneous hydrolysis and promotes its binding to the 30S ribosomal subunits. Also involved in the hydrolysis of GTP during the formation of the 70S ribosomal complex. The protein is Translation initiation factor IF-2 of Streptococcus thermophilus (strain ATCC BAA-491 / LMD-9).